The following is a 72-amino-acid chain: Translational regulator CsrA (72 aa).

The protein belongs to the CsrA/RsmA family. In terms of assembly, homodimer; the beta-strands of each monomer intercalate to form a hydrophobic core, while the alpha-helices form wings that extend away from the core.

The protein resides in the cytoplasm. In terms of biological role, a translational regulator that binds mRNA to regulate translation initiation and/or mRNA stability. Usually binds in the 5'-UTR at or near the Shine-Dalgarno sequence preventing ribosome-binding, thus repressing translation. Its main target seems to be the major flagellin gene, while its function is anatagonized by FliW. The polypeptide is Translational regulator CsrA (Agathobacter rectalis (strain ATCC 33656 / DSM 3377 / JCM 17463 / KCTC 5835 / VPI 0990) (Eubacterium rectale)).